A 400-amino-acid chain; its full sequence is Peroxisome biogenesis factor 16 (400 aa).

The disordered stretch occupies residues 176-226 (QKQFQNKRPAVTMSINNNNNINNNDNNNINNNNNTNDDNFNNNNNNNNNRR). Over residues 190 to 224 (INNNNNINNNDNNNINNNNNTNDDNFNNNNNNNNN) the composition is skewed to low complexity.

The protein belongs to the peroxin-16 family.

It is found in the cytoplasm. Functionally, required for peroxisome membrane biogenesis. The protein is Peroxisome biogenesis factor 16 (pex16) of Dictyostelium discoideum (Social amoeba).